A 1036-amino-acid chain; its full sequence is Exportin-T (1036 aa).

This sequence belongs to the exportin family.

It is found in the nucleus. The protein localises to the cytoplasm. In terms of biological role, tRNA nucleus export receptor which facilitates tRNA translocation across the nuclear pore complex. Involved in pre-tRNA splicing, probably by affecting the interaction of pre-tRNA with splicing endonuclease. The polypeptide is Exportin-T (LOS1) (Phaeosphaeria nodorum (strain SN15 / ATCC MYA-4574 / FGSC 10173) (Glume blotch fungus)).